The chain runs to 319 residues: uncharacterized protein (319 aa).

The signal sequence occupies residues 1–27; the sequence is MYKKFVPFAVFLFLFFVSFEMMENPHA. Residues 130–306 form the NodB homology domain; the sequence is PMVAFLINVA…QIKDKGYALG (177 aa).

The protein belongs to the polysaccharide deacetylase family.

This is an uncharacterized protein from Bacillus subtilis (strain 168).